The primary structure comprises 162 residues: Crossover junction endodeoxyribonuclease RuvC (162 aa).

Active-site residues include Asp8, Glu69, and His141. Positions 8, 69, and 141 each coordinate Mg(2+).

It belongs to the RuvC family. As to quaternary structure, homodimer which binds Holliday junction (HJ) DNA. The HJ becomes 2-fold symmetrical on binding to RuvC with unstacked arms; it has a different conformation from HJ DNA in complex with RuvA. In the full resolvosome a probable DNA-RuvA(4)-RuvB(12)-RuvC(2) complex forms which resolves the HJ. Mg(2+) is required as a cofactor.

The protein resides in the cytoplasm. It carries out the reaction Endonucleolytic cleavage at a junction such as a reciprocal single-stranded crossover between two homologous DNA duplexes (Holliday junction).. Functionally, the RuvA-RuvB-RuvC complex processes Holliday junction (HJ) DNA during genetic recombination and DNA repair. Endonuclease that resolves HJ intermediates. Cleaves cruciform DNA by making single-stranded nicks across the HJ at symmetrical positions within the homologous arms, yielding a 5'-phosphate and a 3'-hydroxyl group; requires a central core of homology in the junction. The consensus cleavage sequence is 5'-(A/T)TT(C/G)-3'. Cleavage occurs on the 3'-side of the TT dinucleotide at the point of strand exchange. HJ branch migration catalyzed by RuvA-RuvB allows RuvC to scan DNA until it finds its consensus sequence, where it cleaves and resolves the cruciform DNA. The protein is Crossover junction endodeoxyribonuclease RuvC of Wolbachia sp. subsp. Brugia malayi (strain TRS).